Consider the following 105-residue polypeptide: DNA-directed RNA polymerase subunit omega (105 aa).

This sequence belongs to the RNA polymerase subunit omega family. In terms of assembly, the RNAP catalytic core consists of 2 alpha, 1 beta, 1 beta' and 1 omega subunit. When a sigma factor is associated with the core the holoenzyme is formed, which can initiate transcription.

It catalyses the reaction RNA(n) + a ribonucleoside 5'-triphosphate = RNA(n+1) + diphosphate. Its function is as follows. Promotes RNA polymerase assembly. Latches the N- and C-terminal regions of the beta' subunit thereby facilitating its interaction with the beta and alpha subunits. The sequence is that of DNA-directed RNA polymerase subunit omega from Streptococcus pyogenes serotype M12 (strain MGAS2096).